The primary structure comprises 103 residues: Large ribosomal subunit protein bL21 (103 aa).

Belongs to the bacterial ribosomal protein bL21 family. As to quaternary structure, part of the 50S ribosomal subunit. Contacts protein L20.

Functionally, this protein binds to 23S rRNA in the presence of protein L20. The chain is Large ribosomal subunit protein bL21 from Legionella pneumophila (strain Lens).